The chain runs to 382 residues: ATP phosphoribosyltransferase regulatory subunit (382 aa).

It belongs to the class-II aminoacyl-tRNA synthetase family. HisZ subfamily. Heteromultimer composed of HisG and HisZ subunits.

It localises to the cytoplasm. Its pathway is amino-acid biosynthesis; L-histidine biosynthesis; L-histidine from 5-phospho-alpha-D-ribose 1-diphosphate: step 1/9. Its function is as follows. Required for the first step of histidine biosynthesis. May allow the feedback regulation of ATP phosphoribosyltransferase activity by histidine. This chain is ATP phosphoribosyltransferase regulatory subunit, found in Verminephrobacter eiseniae (strain EF01-2).